We begin with the raw amino-acid sequence, 481 residues long: Argininosuccinate synthase (481 aa).

Residues 17 to 25 (AFSGGLDTS) and Ala-43 contribute to the ATP site. Tyr-99 serves as a coordination point for L-citrulline. The ATP site is built by Gly-129 and Thr-131. L-aspartate contacts are provided by Thr-131, Asn-135, and Asp-136. Position 135 (Asn-135) interacts with L-citrulline. Position 136 (Asp-136) interacts with ATP. The L-citrulline site is built by Arg-139 and Ser-192. An ATP-binding site is contributed by Asp-194. L-citrulline-binding residues include Thr-201, Glu-203, and Glu-280.

The protein belongs to the argininosuccinate synthase family. Type 2 subfamily. As to quaternary structure, homotetramer.

The protein localises to the cytoplasm. It carries out the reaction L-citrulline + L-aspartate + ATP = 2-(N(omega)-L-arginino)succinate + AMP + diphosphate + H(+). Its pathway is amino-acid biosynthesis; L-arginine biosynthesis; L-arginine from L-ornithine and carbamoyl phosphate: step 2/3. This Streptomyces coelicolor (strain ATCC BAA-471 / A3(2) / M145) protein is Argininosuccinate synthase (argG).